A 236-amino-acid polypeptide reads, in one-letter code: 2-C-methyl-D-erythritol 4-phosphate cytidylyltransferase (236 aa).

This sequence belongs to the IspD/TarI cytidylyltransferase family. IspD subfamily.

It carries out the reaction 2-C-methyl-D-erythritol 4-phosphate + CTP + H(+) = 4-CDP-2-C-methyl-D-erythritol + diphosphate. It functions in the pathway isoprenoid biosynthesis; isopentenyl diphosphate biosynthesis via DXP pathway; isopentenyl diphosphate from 1-deoxy-D-xylulose 5-phosphate: step 2/6. Catalyzes the formation of 4-diphosphocytidyl-2-C-methyl-D-erythritol from CTP and 2-C-methyl-D-erythritol 4-phosphate (MEP). The sequence is that of 2-C-methyl-D-erythritol 4-phosphate cytidylyltransferase from Burkholderia thailandensis (strain ATCC 700388 / DSM 13276 / CCUG 48851 / CIP 106301 / E264).